Here is a 311-residue protein sequence, read N- to C-terminus: Homeobox-leucine zipper protein ATHB-6 (311 aa).

The span at 1-10 (MMKRLSSSDS) shows a compositional bias: polar residues. Residues 1–32 (MMKRLSSSDSVGGLISLCPTTSTDEQSPRRYG) are disordered. The interval 1–43 (MMKRLSSSDSVGGLISLCPTTSTDEQSPRRYGGREFQSMLEGY) is interaction with ABI1. Residues 59–118 (LSEKKRRLSINQVKALEKNFELENKLEPERKVKLAQELGLQPRQVAVWFQNRRARWKTKQ) constitute a DNA-binding region (homeobox). Residues 119-154 (LEKDYGVLKTQYDSLRHNFDSLRRDNESLLQEISKL) are leucine-zipper. The tract at residues 157–183 (KLNGGGGEEEEEENNAAVTTESDISVK) is disordered. The interaction with ABI1 stretch occupies residues 218-311 (LRDLLPLKAA…HWYSTVDHWN (94 aa)).

It belongs to the HD-ZIP homeobox family. Class I subfamily. In terms of assembly, interacts with ABI1. In terms of processing, phosphorylated by PKA. Reversible inactivation of the binding to DNA by phosphorylation. As to expression, widely expressed.

It is found in the nucleus. Its function is as follows. Transcription activator that may act as growth regulators in response to water deficit. Interacts with the core sequence 5'-CAATTATTA-3' of promoters in response to ABA and in an ABI1-dependent manner. Involved in the negative regulation of the ABA signaling pathway. The polypeptide is Homeobox-leucine zipper protein ATHB-6 (ATHB-6) (Arabidopsis thaliana (Mouse-ear cress)).